Here is a 322-residue protein sequence, read N- to C-terminus: Tetraacyldisaccharide 4'-kinase (322 aa).

40–47 serves as a coordination point for ATP; the sequence is CVGGTGKT.

It belongs to the LpxK family.

The catalysed reaction is a lipid A disaccharide + ATP = a lipid IVA + ADP + H(+). Its pathway is glycolipid biosynthesis; lipid IV(A) biosynthesis; lipid IV(A) from (3R)-3-hydroxytetradecanoyl-[acyl-carrier-protein] and UDP-N-acetyl-alpha-D-glucosamine: step 6/6. Transfers the gamma-phosphate of ATP to the 4'-position of a tetraacyldisaccharide 1-phosphate intermediate (termed DS-1-P) to form tetraacyldisaccharide 1,4'-bis-phosphate (lipid IVA). The protein is Tetraacyldisaccharide 4'-kinase of Koribacter versatilis (strain Ellin345).